Here is a 102-residue protein sequence, read N- to C-terminus: MTGQNIRIRLKAFDHRILDASTREIVSTAKRTGASVRGPVPLPTRIEKFTVNRSPHVDKKSREQFEMRTHKRLLDIVDPTPQTVDALMKLDLAAGVDVEIKL.

Belongs to the universal ribosomal protein uS10 family. As to quaternary structure, part of the 30S ribosomal subunit.

Its function is as follows. Involved in the binding of tRNA to the ribosomes. The sequence is that of Small ribosomal subunit protein uS10 from Agrobacterium fabrum (strain C58 / ATCC 33970) (Agrobacterium tumefaciens (strain C58)).